The sequence spans 572 residues: Solute carrier family 22 member 16 (572 aa).

The chain crosses the membrane as a helical span at residues 21–41 (IFLYFICAFQNISCGIHYLAS). The N-linked (GlcNAc...) asparagine glycan is linked to Asn57. The next 5 membrane-spanning stretches (helical) occupy residues 156–176 (LIQPTFMFGVLLGAVIFGYLS), 183–203 (LVLWASSTGVFLFGIAAAFTF), 208–228 (FIVARFLLAISGSGYLVVVFV), 244–264 (IHLHSFFAFGTMVVALTGYFV), and 268–288 (WIYQIVLSSVTVPFVLCCWML). The N-linked (GlcNAc...) asparagine glycan is linked to Asn315. 6 helical membrane-spanning segments follow: residues 359 to 379 (TLILWLIWFTGCLGFYTFSLN), 389 to 409 (LNLFLMGVVEIPAYVLVCLGM), 416 to 436 (NILIFSLLSSAVTSGVIMVIP), 441 to 461 (VWLVVASMAGKFFIGAAFGLI), 476 to 496 (LAVGSGSTVGRVGSIVAPLCI), and 503 to 523 (IFMPQLLVGTLALVSGVLTFL). An N-linked (GlcNAc...) asparagine glycan is attached at Asn559.

Belongs to the major facilitator (TC 2.A.1) superfamily. Organic cation transporter (TC 2.A.1.19) family.

It localises to the cell membrane. The enzyme catalyses (R)-carnitine(in) = (R)-carnitine(out). The catalysed reaction is spermidine(in) = spermidine(out). Its function is as follows. Facilitative organic cation transporter that mediates the transport of carnitine as well as the polyamine spermidine. Mediates the partially Na(+)-dependent bidirectional transport of carnitine. May mediate L-carnitine secretion from testis epididymal epithelium into the lumen which is involved in the maturation of spermatozoa. The polypeptide is Solute carrier family 22 member 16 (SLC22A16) (Bos taurus (Bovine)).